Reading from the N-terminus, the 125-residue chain is Phosphoribosyl-AMP cyclohydrolase (125 aa).

Aspartate 74 is a binding site for Mg(2+). Cysteine 75 contacts Zn(2+). Residues aspartate 76 and aspartate 78 each contribute to the Mg(2+) site. Residues cysteine 92 and cysteine 99 each contribute to the Zn(2+) site.

The protein belongs to the PRA-CH family. Homodimer. Mg(2+) serves as cofactor. It depends on Zn(2+) as a cofactor.

The protein localises to the cytoplasm. It carries out the reaction 1-(5-phospho-beta-D-ribosyl)-5'-AMP + H2O = 1-(5-phospho-beta-D-ribosyl)-5-[(5-phospho-beta-D-ribosylamino)methylideneamino]imidazole-4-carboxamide. Its pathway is amino-acid biosynthesis; L-histidine biosynthesis; L-histidine from 5-phospho-alpha-D-ribose 1-diphosphate: step 3/9. Catalyzes the hydrolysis of the adenine ring of phosphoribosyl-AMP. This Syntrophotalea carbinolica (strain DSM 2380 / NBRC 103641 / GraBd1) (Pelobacter carbinolicus) protein is Phosphoribosyl-AMP cyclohydrolase.